Consider the following 836-residue polypeptide: Protein IWS1 homolog A (836 aa).

The interval M1–Y542 is disordered. Basic and acidic residues-rich tracts occupy residues Q20–S36, H43–P122, E133–R148, D157–P186, D206–S218, V288–D309, R370–Q386, and E458–D469. Residues S476 to L485 show a composition bias toward acidic residues. Basic and acidic residues predominate over residues D533–Y542. The 79-residue stretch at S631–L709 folds into the TFIIS N-terminal domain. The tract at residues K714–D746 is disordered. Basic and acidic residues predominate over residues M716–E727.

Belongs to the IWS1 family.

It localises to the nucleus. In terms of biological role, transcription factor which plays a key role in defining the composition of the RNA polymerase II (RNAPII) elongation complex and in modulating the production of mature mRNA transcripts. This Xenopus laevis (African clawed frog) protein is Protein IWS1 homolog A (iws1-a).